The chain runs to 314 residues: Methionyl-tRNA formyltransferase (314 aa).

S111–P114 contributes to the (6S)-5,6,7,8-tetrahydrofolate binding site.

This sequence belongs to the Fmt family.

It carries out the reaction L-methionyl-tRNA(fMet) + (6R)-10-formyltetrahydrofolate = N-formyl-L-methionyl-tRNA(fMet) + (6S)-5,6,7,8-tetrahydrofolate + H(+). In terms of biological role, attaches a formyl group to the free amino group of methionyl-tRNA(fMet). The formyl group appears to play a dual role in the initiator identity of N-formylmethionyl-tRNA by promoting its recognition by IF2 and preventing the misappropriation of this tRNA by the elongation apparatus. This Chlorobium luteolum (strain DSM 273 / BCRC 81028 / 2530) (Pelodictyon luteolum) protein is Methionyl-tRNA formyltransferase.